The chain runs to 728 residues: FAS1 domain-containing protein fsc1 (728 aa).

Residues 1–21 (MNLQFRLYLLFILLFISFANG) form the signal peptide. The Vacuolar segment spans residues 22-670 (KNEYEDKSTS…TKRQNRWRIT (649 aa)). 2 FAS1 domains span residues 29–151 (STSI…DNII) and 154–285 (PPPA…SSLI). N-linked (GlcNAc...) asparagine glycosylation occurs at N89. 2 N-linked (GlcNAc...) asparagine glycosylation sites follow: N404 and N501. Residues 671-691 (FISISGLLLSVGICVLCYKIY) traverse the membrane as a helical segment. The Cytoplasmic segment spans residues 692–728 (FKFFRNRFMNQGEREPLLAPADSDTMAGRRNSSSLSV).

The protein resides in the vacuole membrane. Functionally, required for the fusion of autophagosomes with the vacuole. The protein is FAS1 domain-containing protein fsc1 (fsc1) of Schizosaccharomyces pombe (strain 972 / ATCC 24843) (Fission yeast).